The sequence spans 332 residues: Methionine synthase (332 aa).

The Zn(2+) site is built by H211, C213, and C296.

This sequence belongs to the archaeal MetE family. It depends on Zn(2+) as a cofactor.

The protein operates within amino-acid biosynthesis; L-methionine biosynthesis via de novo pathway. Its function is as follows. Catalyzes the transfer of a methyl group to L-homocysteine resulting in methionine formation. The physiological methyl donor is unknown. The polypeptide is Methionine synthase (Saccharolobus solfataricus (strain ATCC 35092 / DSM 1617 / JCM 11322 / P2) (Sulfolobus solfataricus)).